A 265-amino-acid polypeptide reads, in one-letter code: Small ribosomal subunit protein eS1 (265 aa).

The segment at 234 to 256 is disordered; the sequence is EGSTTTSKGVTSEGGEKVDRVDG. Residues 247 to 256 show a composition bias toward basic and acidic residues; it reads GGEKVDRVDG.

It belongs to the eukaryotic ribosomal protein eS1 family. Component of the small ribosomal subunit. Mature ribosomes consist of a small (40S) and a large (60S) subunit. The 40S subunit contains about 33 different proteins and 1 molecule of RNA (18S). The 60S subunit contains about 49 different proteins and 3 molecules of RNA (28S, 5.8S and 5S).

Its subcellular location is the cytoplasm. The sequence is that of Small ribosomal subunit protein eS1 from Aplysia californica (California sea hare).